A 237-amino-acid chain; its full sequence is Phosphatidylserine decarboxylase proenzyme (237 aa).

S206 acts as the Schiff-base intermediate with substrate; via pyruvic acid in catalysis. The residue at position 206 (S206) is a Pyruvic acid (Ser); by autocatalysis.

This sequence belongs to the phosphatidylserine decarboxylase family. PSD-A subfamily. Heterodimer of a large membrane-associated beta subunit and a small pyruvoyl-containing alpha subunit. Requires pyruvate as cofactor. Is synthesized initially as an inactive proenzyme. Formation of the active enzyme involves a self-maturation process in which the active site pyruvoyl group is generated from an internal serine residue via an autocatalytic post-translational modification. Two non-identical subunits are generated from the proenzyme in this reaction, and the pyruvate is formed at the N-terminus of the alpha chain, which is derived from the carboxyl end of the proenzyme. The post-translation cleavage follows an unusual pathway, termed non-hydrolytic serinolysis, in which the side chain hydroxyl group of the serine supplies its oxygen atom to form the C-terminus of the beta chain, while the remainder of the serine residue undergoes an oxidative deamination to produce ammonia and the pyruvoyl prosthetic group on the alpha chain.

The protein resides in the cell membrane. It carries out the reaction a 1,2-diacyl-sn-glycero-3-phospho-L-serine + H(+) = a 1,2-diacyl-sn-glycero-3-phosphoethanolamine + CO2. It functions in the pathway phospholipid metabolism; phosphatidylethanolamine biosynthesis; phosphatidylethanolamine from CDP-diacylglycerol: step 2/2. Its function is as follows. Catalyzes the formation of phosphatidylethanolamine (PtdEtn) from phosphatidylserine (PtdSer). This Mycobacteroides abscessus (strain ATCC 19977 / DSM 44196 / CCUG 20993 / CIP 104536 / JCM 13569 / NCTC 13031 / TMC 1543 / L948) (Mycobacterium abscessus) protein is Phosphatidylserine decarboxylase proenzyme.